The chain runs to 453 residues: MEEKQERRRRIVLIPAPAQGHISPMMQLARALHLKGFSITVAQTKFNYLKPSKDLADFQFITIPESLPASDLKNLGPVWFLLKLNKECEFSFKECLGQLLLQKQLIPEEEIACVIYDEFMYFAEAAAKEFNLPKVIFSTENATAFACRSAMCKLYAKDGLAPLKEGCGREEELVPKLHPLRYKDLPTSAFAPVEASVEVFKSSCDKGTASAMIINTVRCLEISSLEWLQQELKIPIYPIGPLHMVSSAPPTSLLDENESCIDWLNKQKPSSVIYISLGSFTLLETKEVLEMASGLVSSNQHFLWVIRPGSILGSELTNEELLSMMEIPDRGYIVKWAPQKQVLAHSAVGAFWSHCGWNSTLESMGEGVPMICRPFTTDQKVNARYVECVWRVGVQVEGELKRGVVERAVKRLLVDEEGEEMKLRALSLKEKLKVSVLPGGSSHSSLDDLIKTL.

UDP-alpha-D-glucose is bound by residues S279, 337–339 (APQ), 354–362 (HCGWNSTLE), and 376–379 (TTDQ).

The protein belongs to the UDP-glycosyltransferase family.

The polypeptide is UDP-glycosyltransferase 76E9 (UGT76E9) (Arabidopsis thaliana (Mouse-ear cress)).